The following is a 162-amino-acid chain: Regulator of sigma D (162 aa).

Belongs to the Rsd/AlgQ family. Interacts with RpoD.

It localises to the cytoplasm. In terms of biological role, binds RpoD and negatively regulates RpoD-mediated transcription activation by preventing the interaction between the primary sigma factor RpoD with the catalytic core of the RNA polymerase and with promoter DNA. May be involved in replacement of the RNA polymerase sigma subunit from RpoD to RpoS during the transition from exponential growth to the stationary phase. The sequence is that of Regulator of sigma D from Salmonella choleraesuis (strain SC-B67).